A 229-amino-acid chain; its full sequence is Cytidylate kinase (229 aa).

15 to 23 (GPAASGKST) contributes to the ATP binding site.

The protein belongs to the cytidylate kinase family. Type 1 subfamily.

Its subcellular location is the cytoplasm. It catalyses the reaction CMP + ATP = CDP + ADP. The catalysed reaction is dCMP + ATP = dCDP + ADP. This Herpetosiphon aurantiacus (strain ATCC 23779 / DSM 785 / 114-95) protein is Cytidylate kinase.